Consider the following 454-residue polypeptide: Uridine kinase (454 aa).

28–35 contacts ATP; the sequence is GPSGSGKT.

This sequence belongs to the uridine kinase family.

Its subcellular location is the cytoplasm. It is found in the nucleus. It catalyses the reaction uridine + ATP = UMP + ADP + H(+). The enzyme catalyses cytidine + ATP = CMP + ADP + H(+). It participates in pyrimidine metabolism; CTP biosynthesis via salvage pathway; CTP from cytidine: step 1/3. Its pathway is pyrimidine metabolism; UMP biosynthesis via salvage pathway; UMP from uridine: step 1/1. In terms of biological role, catalyzes the conversion of uridine into UMP and cytidine into CMP in the pyrimidine salvage pathway. This Schizosaccharomyces pombe (strain 972 / ATCC 24843) (Fission yeast) protein is Uridine kinase (urk1).